The primary structure comprises 606 residues: MTIRGLVGEAPTKNQEMLNWIEEAVELFQPESVVFCDGSEEEWNELAEQLVEHGTLIKLDEEAQPNSFLARSNPSDVARVESRTFICSKTEEDAGPTNNWMDPEQMRAEMREHFSGSMKGRRMYIVPFCMGPITDPSPKLGIEITDSPYVVMSMRIMTRMGKEALDKIGENGEFVKGLHSVGAPLEPGQEDSTWPCNDTKYITHFPEDREIWSYGSGYGGNAILAKKCYALRIASAMARDEGWMAEHMLILKLISPEDKAYYICAAFPSACGKTNLAMIQPTIPGWRAEVVGDDIAWLHFGEDGRLYAVNPENGFFGVAPGTNYASNPMAMKSMEPGNTLYTNVALTDDNNVWWESKEGEPQHLIDWLGNEWTPDSGNKAAHPNSRYCVPIEQCPVAAPEFNDPKGVPVSAILFGGRRADTVPLVTQARDWNHATFIGATLASGQTAAAAEAAVGSLRHDPMAMLPFIGYNAGDYLQHWIDMGNKGGDKMPEVFLVNWFRRGEDGRFLWPGFGENSRVLKWIIDRIEGRVEADETVVGYTARYEDIYTDGLKETEEDIREALSVNPADWERDLADNEEWLKFLGPKVPSEVWDEFQGLKDRVEAAK.

Residues Arg-79 and 218 to 220 (YGG) contribute to the substrate site. 2 residues coordinate Mn(2+): Lys-227 and His-247. Ser-269 is a substrate binding site. 270-275 (ACGKTN) is a GTP binding site. Cys-271 is an active-site residue. Asp-294 provides a ligand contact to Mn(2+). Position 384–386 (384–386 (NSR)) interacts with substrate. Residues Arg-386, Arg-417, and 512–515 (FGEN) contribute to the GTP site.

Belongs to the phosphoenolpyruvate carboxykinase [GTP] family. In terms of assembly, monomer. Requires Mn(2+) as cofactor.

The protein resides in the cytoplasm. The enzyme catalyses oxaloacetate + GTP = phosphoenolpyruvate + GDP + CO2. Its pathway is carbohydrate biosynthesis; gluconeogenesis. Its function is as follows. Catalyzes the conversion of oxaloacetate (OAA) to phosphoenolpyruvate (PEP), the rate-limiting step in the metabolic pathway that produces glucose from lactate and other precursors derived from the citric acid cycle. In Corynebacterium jeikeium (strain K411), this protein is Phosphoenolpyruvate carboxykinase [GTP].